A 384-amino-acid chain; its full sequence is S-adenosylmethionine synthase (384 aa).

Histidine 15 contacts ATP. Aspartate 17 provides a ligand contact to Mg(2+). Glutamate 43 is a binding site for K(+). Glutamate 56 and glutamine 99 together coordinate L-methionine. The segment at 99–109 is flexible loop; that stretch reads QSPDINQGVDR. ATP-binding positions include 164-166, 230-231, aspartate 239, 245-246, alanine 262, and lysine 266; these read DAK, RF, and RK. Aspartate 239 serves as a coordination point for L-methionine. An L-methionine-binding site is contributed by lysine 270.

It belongs to the AdoMet synthase family. Homotetramer; dimer of dimers. It depends on Mg(2+) as a cofactor. Requires K(+) as cofactor.

The protein resides in the cytoplasm. The enzyme catalyses L-methionine + ATP + H2O = S-adenosyl-L-methionine + phosphate + diphosphate. Its pathway is amino-acid biosynthesis; S-adenosyl-L-methionine biosynthesis; S-adenosyl-L-methionine from L-methionine: step 1/1. Catalyzes the formation of S-adenosylmethionine (AdoMet) from methionine and ATP. The overall synthetic reaction is composed of two sequential steps, AdoMet formation and the subsequent tripolyphosphate hydrolysis which occurs prior to release of AdoMet from the enzyme. The polypeptide is S-adenosylmethionine synthase (Citrobacter koseri (strain ATCC BAA-895 / CDC 4225-83 / SGSC4696)).